The primary structure comprises 478 residues: Aspartate ammonia-lyase (478 aa).

Residues Thr104, Ser143, Thr144, Asn145, and Thr190 each coordinate L-aspartate. Positions 320–329 are SS loop; sequence GSSIMPAKVN. The active-site Proton acceptor is the Ser321. Residues Ser322 and Lys327 each contribute to the L-aspartate site.

It belongs to the class-II fumarase/aspartase family. Aspartase subfamily. Homotetramer.

The enzyme catalyses L-aspartate = fumarate + NH4(+). In terms of biological role, catalyzes the reversible conversion of L-aspartate to fumarate and ammonia. The sequence is that of Aspartate ammonia-lyase (aspA) from Escherichia coli O157:H7.